We begin with the raw amino-acid sequence, 84 residues long: MFSLKLFVVFLAVCICVSQAVSYTDCTESGQNYCLCVGSNVCGEGKNCQLSSSGNQCVHGEGTPKPKSQTEGDFEEIPDEDILN.

Positions 1–20 (MFSLKLFVVFLAVCICVSQA) are cleaved as a signal peptide. The tract at residues 21-23 (VSY) is interaction with thrombin active site. Intrachain disulfides connect Cys-26/Cys-34, Cys-36/Cys-48, and Cys-42/Cys-57. A disordered region spans residues 53-84 (SGNQCVHGEGTPKPKSQTEGDFEEIPDEDILN). Thr-63 carries O-linked (GalNAc...) threonine glycosylation. Over residues 72–84 (GDFEEIPDEDILN) the composition is skewed to acidic residues. The tract at residues 73-84 (DFEEIPDEDILN) is interaction with fibrinogen-binding exosite of thrombin.

This sequence belongs to the protease inhibitor I14 (hirudin) family.

It localises to the secreted. Its function is as follows. Hirudin is a potent thrombin-specific protease inhibitor. It forms a stable non-covalent complex with alpha-thrombin, thereby abolishing its ability to cleave fibrinogen. This Hirudinaria manillensis (Asian medical leech) protein is Hirudin-HM2.